A 218-amino-acid polypeptide reads, in one-letter code: UPF0301 protein RPB_4502 (218 aa).

The interval 1–26 (MVTKSKRPKSGDRSGREPGNAGPIEQ) is disordered.

It belongs to the UPF0301 (AlgH) family.

The polypeptide is UPF0301 protein RPB_4502 (Rhodopseudomonas palustris (strain HaA2)).